A 623-amino-acid polypeptide reads, in one-letter code: Interleukin-27 receptor subunit alpha (623 aa).

Positions methionine 1–glycine 24 are cleaved as a signal peptide. The Extracellular segment spans residues threonine 25 to lysine 510. 2 Fibronectin type-III domains span residues serine 30 to aspartate 124 and threonine 125 to leucine 225. An N-linked (GlcNAc...) asparagine glycan is attached at asparagine 46. Positions tryptophan 211 to serine 215 match the WSXWS motif motif. Residues asparagine 296, asparagine 305, asparagine 360, asparagine 368, and asparagine 461 are each glycosylated (N-linked (GlcNAc...) asparagine). 2 consecutive Fibronectin type-III domains span residues alanine 316–alanine 412 and glycine 413–asparagine 505. Residues alanine 511 to alanine 531 form a helical membrane-spanning segment. The Cytoplasmic segment spans residues serine 532–valine 623. The Box 1 motif signature appears at isoleucine 552 to alanine 560.

It belongs to the type I cytokine receptor family. Type 2 subfamily. Expressed in CD4+ and CD8+ T-cells, B-cells, natural killer cells and macrophages. Highest levels in CD4+ T-cells and natural killer cells. Expression highest in Th0 cells.

It localises to the membrane. Its function is as follows. Receptor for IL27. Requires IL6ST/GP130 to mediate signal transduction in response to IL27. This signaling system acts through STAT3 and STAT1. Involved in the regulation of Th1-type immune responses. Also appears to be involved in innate defense mechanisms. This chain is Interleukin-27 receptor subunit alpha (Il27ra), found in Mus musculus (Mouse).